A 25-amino-acid polypeptide reads, in one-letter code: Toxin LyeTx 1 (25 aa).

Leucine amide is present on L25.

In terms of tissue distribution, expressed by the venom gland.

It is found in the secreted. Its function is as follows. Has antimicrobial activity against Gram-positive bacterium S.aureus (MIC=3.79 uM), Gram-negative bacterium E.coli (MIC=7.81 uM) and yeasts C.krusei (MIC=26.3 uM) and C.neoformans (MIC=13.2 uM). Has hemolytic activity against rabbit erythrocytes. Forms pores in lipid bilayers in vitro; pore formation is reduced when cholesterol is present in the bilayers. The sequence is that of Toxin LyeTx 1 from Lycosa erythrognatha (Wolf spider).